The chain runs to 409 residues: Elongation factor Tu, chloroplastic (409 aa).

One can recognise a tr-type G domain in the interval 10 to 214; it reads KPHVNIGTIG…AVDEYIPTPE (205 aa). The G1 stretch occupies residues 19-26; sequence GHVDHGKT. 19 to 26 provides a ligand contact to GTP; the sequence is GHVDHGKT. Threonine 26 serves as a coordination point for Mg(2+). A G2 region spans residues 60 to 64; it reads GITIN. A G3 region spans residues 81-84; it reads DCPG. GTP contacts are provided by residues 81-85 and 136-139; these read DCPGH and NKED. Residues 136–139 form a G4 region; it reads NKED. The segment at 174–176 is G5; that stretch reads SAL.

It belongs to the TRAFAC class translation factor GTPase superfamily. Classic translation factor GTPase family. EF-Tu/EF-1A subfamily.

It is found in the plastid. The protein resides in the chloroplast. It catalyses the reaction GTP + H2O = GDP + phosphate + H(+). Functionally, GTP hydrolase that promotes the GTP-dependent binding of aminoacyl-tRNA to the A-site of ribosomes during protein biosynthesis. This chain is Elongation factor Tu, chloroplastic (tufA), found in Trieres chinensis (Marine centric diatom).